The sequence spans 753 residues: Bile salt-activated lipase (753 aa).

An N-terminal signal peptide occupies residues 1 to 20 (MGRLQLVVLGLTCCWAVASA). The interval 21-121 (AKLGAVYTEG…KQVSRDLPVM (101 aa)) is heparin-binding. C84 and C100 are oxidised to a cystine. N207 carries an N-linked (GlcNAc...) (complex) asparagine glycan. The Acyl-ester intermediate role is filled by S214. C266 and C277 are joined by a disulfide. Catalysis depends on charge relay system residues D340 and H455. Residues 555–753 (QEATPVPPTG…EAQMPAVIRF (199 aa)) form a disordered region. O-linked (GalNAc...) threonine glycosylation is found at T558, T569, and T579. Tandem repeats lie at residues 559–569 (PVPPTGDSEAT), 570–580 (PVPPTGDSETA), 581–591 (PVPPTGDSGAP), 592–602 (PVPPTGDSGAP), 603–613 (PVPPTGDSGAP), 614–624 (PVPPTGDSGAP), 625–635 (PVPPTGDSGAP), 636–646 (PVPPTGDSGAP), 647–657 (PVPPTGDSGAP), 658–668 (PVPPTGDSGAP), 669–679 (PVPPTGDAGPP), 680–690 (PVPPTGDSGAP), 691–701 (PVPPTGDSGAP), 702–712 (PVTPTGDSETA), 713–723 (PVPPTGDSGAP), 724–734 (PVPPTGDSEAA), and 735–745 (PVPPTDDSKEA). Residues 559–745 (PVPPTGDSEA…VPPTDDSKEA (187 aa)) form a 17 X 11 AA tandem repeats, glycodomain, O-linked (mucin type) region. O-linked (GalNAc...) threonine glycosylation is found at T607, T618, T629, T640, T651, T662, and T673. A compositionally biased stretch (pro residues) spans 668-683 (PPVPPTGDAGPPPVPP).

It belongs to the type-B carboxylesterase/lipase family. As to quaternary structure, interacts with CLC. N- and O-glycosylated. Mammary gland and pancreas. Detected in pancreatic and duodenal juice (at protein level). Expressed by eosinophils.

The protein localises to the secreted. It catalyses the reaction a triacylglycerol + H2O = a diacylglycerol + a fatty acid + H(+). The enzyme catalyses 1,2,3-tri-(9Z-octadecenoyl)-glycerol + H2O = di-(9Z)-octadecenoylglycerol + (9Z)-octadecenoate + H(+). It carries out the reaction 1,2,3-trioctanoylglycerol + H2O = dioctanoylglycerol + octanoate + H(+). The catalysed reaction is a sterol ester + H2O = a sterol + a fatty acid + H(+). It catalyses the reaction cholesteryl (9Z-octadecenoate) + H2O = cholesterol + (9Z)-octadecenoate + H(+). The enzyme catalyses an acetyl ester + H2O = an aliphatic alcohol + acetate + H(+). It carries out the reaction a butanoate ester + H2O = an aliphatic alcohol + butanoate + H(+). The catalysed reaction is 9-hexadecanoyloxy-octadecanoate + H2O = 9-hydroxy-octadecanoate + hexadecanoate + H(+). It catalyses the reaction 9-(9Z-octadecenoyloxy)-octadecanoate + H2O = 9-hydroxy-octadecanoate + (9Z)-octadecenoate + H(+). The enzyme catalyses 1-hexadecanoyl-sn-glycero-3-phosphocholine + H2O = sn-glycerol 3-phosphocholine + hexadecanoate + H(+). It carries out the reaction 12-hexadecanoyloxy-octadecanoate + H2O = 12-hydroxyoctadecanoate + hexadecanoate + H(+). The catalysed reaction is 12-(9Z-octadecenoyloxy)-octadecanoate + H2O = 12-hydroxyoctadecanoate + (9Z)-octadecenoate + H(+). It catalyses the reaction 13-(9Z-octadecenoyloxy)-octadecanoate + H2O = 13-hydroxy-octadecanoate + (9Z)-octadecenoate + H(+). The enzyme catalyses 9-(9Z-hexadecenoyloxy)-octadecanoate + H2O = (9Z)-hexadecenoate + 9-hydroxy-octadecanoate + H(+). It carries out the reaction 12-(9Z-hexadecenoyloxy)-octadecanoate + H2O = 12-hydroxyoctadecanoate + (9Z)-hexadecenoate + H(+). The catalysed reaction is 13-(9Z-hexadecenoyloxy)-octadecanoate + H2O = 13-hydroxy-octadecanoate + (9Z)-hexadecenoate + H(+). It catalyses the reaction 12-octadecanoyloxy-octadecanoate + H2O = 12-hydroxyoctadecanoate + octadecanoate + H(+). The enzyme catalyses 13-octadecanoyloxy-octadecanoate + H2O = 13-hydroxy-octadecanoate + octadecanoate + H(+). It carries out the reaction 5-(9Z-hexadecenoyloxy)-octadecanoate + H2O = 5-hydroxy-octadecanoate + (9Z)-hexadecenoate + H(+). The catalysed reaction is 9-octadecanoyloxy-octadecanoate + H2O = 9-hydroxy-octadecanoate + octadecanoate + H(+). Its activity is regulated as follows. Activated by bile salts such as sodium taurocholate. Catalyzes the hydrolysis of a wide range of substrates including cholesteryl esters, phospholipids, lysophospholipids, di- and tri-acylglycerols, and fatty acid esters of hydroxy fatty acids (FAHFAs). Preferentially hydrolyzes FAHFAs with the ester bond further away from the carboxylate. Unsaturated FAHFAs are hydrolyzed more quickly than saturated FAHFAs. Has an essential role in the complete digestion of dietary lipids and their intestinal absorption, along with the absorption of fat-soluble vitamins. The sequence is that of Bile salt-activated lipase (CEL) from Homo sapiens (Human).